The primary structure comprises 146 residues: Small ribosomal subunit protein uS5 (146 aa).

The region spanning Phe8–Val71 is the S5 DRBM domain.

Belongs to the universal ribosomal protein uS5 family. As to quaternary structure, part of the 30S ribosomal subunit. Contacts proteins S4 and S8.

With S4 and S12 plays an important role in translational accuracy. In terms of biological role, located at the back of the 30S subunit body where it stabilizes the conformation of the head with respect to the body. The chain is Small ribosomal subunit protein uS5 from Sulfurimonas denitrificans (strain ATCC 33889 / DSM 1251) (Thiomicrospira denitrificans (strain ATCC 33889 / DSM 1251)).